The following is a 310-amino-acid chain: Tagatose-6-phosphate kinase (310 aa).

This sequence belongs to the carbohydrate kinase PfkB family. LacC subfamily.

The catalysed reaction is D-tagatofuranose 6-phosphate + ATP = D-tagatofuranose 1,6-bisphosphate + ADP + H(+). It functions in the pathway carbohydrate metabolism; D-tagatose 6-phosphate degradation; D-glyceraldehyde 3-phosphate and glycerone phosphate from D-tagatose 6-phosphate: step 1/2. The protein is Tagatose-6-phosphate kinase of Staphylococcus epidermidis (strain ATCC 12228 / FDA PCI 1200).